The chain runs to 4034 residues: Polyketide synthase-nonribosomal peptide synthetase ACE1 (4034 aa).

The 439-residue stretch at Thr10 to Ser448 folds into the Ketosynthase family 3 (KS3) domain. Catalysis depends on for beta-ketoacyl synthase activity residues Cys183, His322, and His368. The segment at Val560 to Thr879 is acyl transferase. The interval Asn951–Pro1082 is N-terminal hotdog fold. The PKS/mFAS DH domain occupies Asn951–Ala1257. The dehydratase (DH) domain stretch occupies residues Glu952–Ser1252. The Proton acceptor; for dehydratase activity role is filled by His983. Positions Met1097–Ala1257 are C-terminal hotdog fold. Catalysis depends on Asp1157, which acts as the Proton donor; for dehydratase activity. Residues Asn1396–His1594 form a methyltransferase (MT) domain region. Residues Thr2144–Ile2317 form a ketoreductase (KR)domain region. The Carrier 1 domain occupies Lys2424–Ile2505. Position 2465 is an O-(pantetheine 4'-phosphoryl)serine (Ser2465). Residues Lys2512–Ser2598 are disordered. Positions Pro2556 to Ser2577 are enriched in low complexity. Positions Thr2586–Ser2598 are enriched in polar residues. A condensation region spans residues Thr2608 to Tyr3037. The segment at Lys3073–Asp3473 is adenylation. The 81-residue stretch at Ala3598–Asp3678 folds into the Carrier 2 domain. Ser3638 is subject to O-(pantetheine 4'-phosphoryl)serine. The interval Leu3719–Ala3944 is reductase-like.

Belongs to the NRP synthetase family.

Its subcellular location is the cytoplasm. It participates in secondary metabolite biosynthesis. Hybrid PKS-NRPS synthetase; part of the gene cluster that mediates the biosynthesis of a tyrosine-derived cytochalasan acting as a fungal signal recognized by resistant rice plants and leads to avirulence in Pi33 resistant rice cultivars. The first step in the pathway is catalyzed by the hybrid PKS-NRPS ACE1, assisted by the enoyl reductase RAP1, that are responsible for fusion of the tyrosine precursor and the polyketide backbone. The polyketide synthase module (PKS) of ACE1 is responsible for the synthesis of the polyketide backbone and the downstream nonribosomal peptide synthetase (NRPS) amidates the carboxyl end of the polyketide with the tyrosine precursor. Because ACE1 lacks a designated enoylreductase (ER) domain, the required activity is provided the enoyl reductase RAP1. Reduction by the hydrolyase ORFZ, followed by dehydration and intra-molecular Diels-Alder cyclization by the Diels-Alderase ORF3 then yield the required isoindolone-fused macrocycle. A number of oxidative steps catalyzed by the tailoring enzymes identified within the cluster, including cytochrome P450 monooxygenases CYP1 to CYP4, the FAD-linked oxidoreductase OXR2 and the short-chain dehydrogenase/reductase OXR1, are further required to afford the final cytochalasans that confer avirulence and which have still to be identified. The monooxygenase CYP1 has been shown to be a site-selective C-18 hydroxylase whereas the function of CYP3 is the site-selective epoxidation of the C-6/C-7 olefin that is present in some intermediate compounds. Finally, SYN2 and RAP2 are not required for avirulence in Pi33 resistant rice cultivars. In Pyricularia oryzae (strain 70-15 / ATCC MYA-4617 / FGSC 8958) (Rice blast fungus), this protein is Polyketide synthase-nonribosomal peptide synthetase ACE1.